The primary structure comprises 264 residues: Thymidylate synthase (264 aa).

Residue R21 coordinates dUMP. Residue H51 participates in (6R)-5,10-methylene-5,6,7,8-tetrahydrofolate binding. A dUMP-binding site is contributed by 126–127; the sequence is RR. The Nucleophile role is filled by C146. Residues 166–169, N177, and 207–209 contribute to the dUMP site; these read RSAD and HLY. D169 serves as a coordination point for (6R)-5,10-methylene-5,6,7,8-tetrahydrofolate. A263 provides a ligand contact to (6R)-5,10-methylene-5,6,7,8-tetrahydrofolate.

This sequence belongs to the thymidylate synthase family. Bacterial-type ThyA subfamily. Homodimer.

The protein resides in the cytoplasm. The catalysed reaction is dUMP + (6R)-5,10-methylene-5,6,7,8-tetrahydrofolate = 7,8-dihydrofolate + dTMP. Its pathway is pyrimidine metabolism; dTTP biosynthesis. Functionally, catalyzes the reductive methylation of 2'-deoxyuridine-5'-monophosphate (dUMP) to 2'-deoxythymidine-5'-monophosphate (dTMP) while utilizing 5,10-methylenetetrahydrofolate (mTHF) as the methyl donor and reductant in the reaction, yielding dihydrofolate (DHF) as a by-product. This enzymatic reaction provides an intracellular de novo source of dTMP, an essential precursor for DNA biosynthesis. The polypeptide is Thymidylate synthase (Legionella pneumophila subsp. pneumophila (strain Philadelphia 1 / ATCC 33152 / DSM 7513)).